The sequence spans 284 residues: ATP phosphoribosyltransferase (284 aa).

This sequence belongs to the ATP phosphoribosyltransferase family. Long subfamily. It depends on Mg(2+) as a cofactor.

The protein resides in the cytoplasm. It carries out the reaction 1-(5-phospho-beta-D-ribosyl)-ATP + diphosphate = 5-phospho-alpha-D-ribose 1-diphosphate + ATP. The protein operates within amino-acid biosynthesis; L-histidine biosynthesis; L-histidine from 5-phospho-alpha-D-ribose 1-diphosphate: step 1/9. Its activity is regulated as follows. Feedback inhibited by histidine. Functionally, catalyzes the condensation of ATP and 5-phosphoribose 1-diphosphate to form N'-(5'-phosphoribosyl)-ATP (PR-ATP). Has a crucial role in the pathway because the rate of histidine biosynthesis seems to be controlled primarily by regulation of HisG enzymatic activity. This Methanococcoides burtonii (strain DSM 6242 / NBRC 107633 / OCM 468 / ACE-M) protein is ATP phosphoribosyltransferase.